A 287-amino-acid chain; its full sequence is Undecaprenyl-diphosphatase (287 aa).

The next 7 membrane-spanning stretches (helical) occupy residues 6–26, 45–65, 89–109, 111–131, 204–224, 238–258, and 266–286; these read LHLLKAFFLGIVEGLTEFIPV, SGKVFEVVIQFGSILAVMWIF, NLLLAFLPAAVIGAIFIKSIK, VFYHPGVVAVTLVVGGFIMLW, ATEFSFFLAMPTMLGAAVYDL, AIAVGFVAAFLSALVVVRAVL, and YRVFAWYRIALGLVVAAWIYA.

It belongs to the UppP family.

The protein localises to the cell inner membrane. It carries out the reaction di-trans,octa-cis-undecaprenyl diphosphate + H2O = di-trans,octa-cis-undecaprenyl phosphate + phosphate + H(+). Functionally, catalyzes the dephosphorylation of undecaprenyl diphosphate (UPP). Confers resistance to bacitracin. The polypeptide is Undecaprenyl-diphosphatase (Bordetella bronchiseptica (strain ATCC BAA-588 / NCTC 13252 / RB50) (Alcaligenes bronchisepticus)).